A 443-amino-acid polypeptide reads, in one-letter code: Ribosomal protein uS12 methylthiotransferase RimO (443 aa).

The MTTase N-terminal domain occupies 5-115 (PNIGFISLGC…VMKHVHKYVP (111 aa)). [4Fe-4S] cluster-binding residues include cysteine 14, cysteine 50, cysteine 79, cysteine 147, cysteine 151, and cysteine 154. Residues 133-374 (LTPKHYAYLK…MQVQQRISAA (242 aa)) form the Radical SAM core domain. Residues 377-443 (QQKVGKTLAV…ADEYDLWGTC (67 aa)) form the TRAM domain.

Belongs to the methylthiotransferase family. RimO subfamily. It depends on [4Fe-4S] cluster as a cofactor.

The protein resides in the cytoplasm. It catalyses the reaction L-aspartate(89)-[ribosomal protein uS12]-hydrogen + (sulfur carrier)-SH + AH2 + 2 S-adenosyl-L-methionine = 3-methylsulfanyl-L-aspartate(89)-[ribosomal protein uS12]-hydrogen + (sulfur carrier)-H + 5'-deoxyadenosine + L-methionine + A + S-adenosyl-L-homocysteine + 2 H(+). Catalyzes the methylthiolation of an aspartic acid residue of ribosomal protein uS12. The protein is Ribosomal protein uS12 methylthiotransferase RimO of Actinobacillus pleuropneumoniae serotype 5b (strain L20).